Consider the following 158-residue polypeptide: F(420)H(2) dehydrogenase subunit C (158 aa).

The protein belongs to the complex I 30 kDa subunit family. As to quaternary structure, the FPO complex is composed of at least 13 different subunits.

It localises to the cell membrane. It carries out the reaction methanophenazine + reduced coenzyme F420-(gamma-L-Glu)(n) = dihydromethanophenazine + oxidized coenzyme F420-(gamma-L-Glu)(n) + H(+). Its function is as follows. Component of the F(420)H(2) dehydrogenase (FPO complex) which is part of the energy-conserving F(420)H(2):heterodisulfide oxidoreductase system. The membrane-bound electron transfer system of the complex plays an important role in the metabolism of methylotrophic methanogens when the organisms grow on methanol or methylamines. Catalyzes the oxidation of methanophenazine to dihydromethanophenazine. It shuttles electrons from F(420)H(2), via FAD and iron-sulfur (Fe-S) centers, to methanophenazine (an electron carrier in the membrane). It couples the redox reaction to proton translocation (for every two electrons transferred, two hydrogen ions are translocated across the cytoplasmic membrane), and thus conserves the redox energy in a proton gradient. It also catalyzes the oxidation of F(420)H(2) with quinones such as 2,3-dimethyl-1,4-naphthoquinone, 2-methyl-1,4-naphthoquinone and tetramethyl-p-benzoquinone. This Methanosarcina mazei (strain ATCC BAA-159 / DSM 3647 / Goe1 / Go1 / JCM 11833 / OCM 88) (Methanosarcina frisia) protein is F(420)H(2) dehydrogenase subunit C (fpoC).